We begin with the raw amino-acid sequence, 538 residues long: D-alanyl-D-alanine carboxypeptidase (538 aa).

The segment at 1-21 (MKQSSPEPLRPRRTGGRGGAR) is disordered. The first 49 residues, 1–49 (MKQSSPEPLRPRRTGGRGGARRAAALVTIPLLPMTLLGASPALADASGA), serve as a signal peptide directing secretion. The Acyl-ester intermediate role is filled by serine 98. Catalysis depends on lysine 101, which acts as the Proton acceptor. The interval 146–319 (TLSAEDLDAM…KGDVGLGGVP (174 aa)) is absent in class-A beta-lactamases. Serine 347 is an active-site residue. Position 459 (lysine 459) interacts with substrate. A propeptide spans 516–538 (GARMMRGPVQGSGELECSWVQAC) (removed in mature form).

Belongs to the peptidase S13 family.

The protein localises to the secreted. It carries out the reaction Preferential cleavage: (Ac)2-L-Lys-D-Ala-|-D-Ala. Also transpeptidation of peptidyl-alanyl moieties that are N-acyl substituents of D-alanine.. It participates in cell wall biogenesis; peptidoglycan biosynthesis. Inhibited by benzylpenicillin, cephaloridine, ampicillin and cetiofur. Its function is as follows. Removes C-terminal D-alanyl residues from sugar-peptide cell wall precursors. This chain is D-alanyl-D-alanine carboxypeptidase (dac), found in Actinomadura sp. (strain R39).